An 87-amino-acid chain; its full sequence is NADH dehydrogenase [ubiquinone] 1 alpha subcomplex subunit 4-like 2 (87 aa).

Belongs to the complex I NDUFA4 subunit family.

The sequence is that of NADH dehydrogenase [ubiquinone] 1 alpha subcomplex subunit 4-like 2 (NDUFA4L2) from Homo sapiens (Human).